A 506-amino-acid chain; its full sequence is L-amino-acid oxidase (506 aa).

The first 18 residues, 1 to 18 (MNVFFTFSLLFLAALGSC), serve as a signal peptide directing secretion. Cys28 and Cys191 are disulfide-bonded. Residue Glu36 participates in Zn(2+) binding. FAD is bound by residues 61–62 (MS), Ser62, 81–82 (EA), Arg89, and 105–108 (GPMR). Arg108 contributes to the substrate binding site. 3 residues coordinate Zn(2+): Glu111, Glu118, and Glu150. N-linked (GlcNAc...) asparagine glycosylation occurs at Asn190. Position 219 (Asp219) interacts with Zn(2+). His241 lines the substrate pocket. A Zn(2+)-binding site is contributed by Glu248. Residue Val279 participates in FAD binding. Zn(2+) is bound by residues Glu299 and His332. Cys349 and Cys430 are oxidised to a cystine. Tyr390 serves as a coordination point for substrate. His458 serves as a coordination point for Zn(2+). FAD-binding positions include Glu475 and 482–487 (GWIDST). 482–483 (GW) is a binding site for substrate.

The protein belongs to the flavin monoamine oxidase family. FIG1 subfamily. Homodimer; non-covalently linked. Stabilized by a single zinc-binding site located at the dimer interface (Asp-219, His-332 and His-458). Other zinc-bind sites can be understood as transient and non-specific, and appear due to the high concentration of zinc ions used in the crystallization experiments. It depends on FAD as a cofactor. Expressed by the venom gland.

It localises to the secreted. The catalysed reaction is an L-alpha-amino acid + O2 + H2O = a 2-oxocarboxylate + H2O2 + NH4(+). The enzyme catalyses L-leucine + O2 + H2O = 4-methyl-2-oxopentanoate + H2O2 + NH4(+). It carries out the reaction L-phenylalanine + O2 + H2O = 3-phenylpyruvate + H2O2 + NH4(+). It catalyses the reaction L-tryptophan + O2 + H2O = indole-3-pyruvate + H2O2 + NH4(+). The catalysed reaction is L-methionine + O2 + H2O = 4-methylsulfanyl-2-oxobutanoate + H2O2 + NH4(+). The enzyme catalyses L-isoleucine + O2 + H2O = (S)-3-methyl-2-oxopentanoate + H2O2 + NH4(+). It carries out the reaction L-tyrosine + O2 + H2O = 3-(4-hydroxyphenyl)pyruvate + H2O2 + NH4(+). Functionally, catalyzes an oxidative deamination of predominantly hydrophobic and aromatic L-amino acids, thus producing hydrogen peroxide that may contribute to the diverse toxic effects of this enzyme. Shows high catalytic activity against L-Met, L-Leu, L-Phe, L-Trp, L-Tyr, L-Ile. Shows no or weak activity on L-Cys, L-Val, L-Gln, L-Thr, L-Ser, L-Lys, L-Arg, L-Asn, L-Glu, L-Gly, L-Pro, L-Asp and L-His. Induces platelet aggregation in platelet-rich plasma, probably due to hydrogen peroxide production, since catalase inhibits aggregation effect. Induces moderate mouse paw edema. Induces apoptosis and shows cytotoxicity against several cancer cell lines, which is inhibited by catalase. Shows hemolytic activity and antibacterial activities against both Gram-positive and Gram-negative bacteria. Has parasiticidal activities against both trypanosomes and leishmania, as a result of enzyme-catalyzed hydrogen peroxide production. Unlike other snake venom L-amino acid oxidases, does not induce hemorrhage (with 50 ug of enzyme). The sequence is that of L-amino-acid oxidase from Bothrops atrox (Barba amarilla).